The chain runs to 186 residues: Transposon Tn21 resolvase (186 aa).

A Resolvase/invertase-type recombinase catalytic domain is found at 4–137; the sequence is QRIGYIRVST…EGIALAKQRG (134 aa). The active-site O-(5'-phospho-DNA)-serine intermediate is Ser-12. A DNA-binding region (H-T-H motif) is located at residues 164–183; sequence KTKLAREFGISRETLYQYLR.

This sequence belongs to the site-specific recombinase resolvase family.

In terms of biological role, resolvase catalyzes the resolution (a site-specific recombination) of the cointegrated replicon to yield the final transposition products. This is Transposon Tn21 resolvase (tnpR) from Escherichia coli.